A 554-amino-acid polypeptide reads, in one-letter code: Glutamine--tRNA ligase (554 aa).

The 'HIGH' region signature appears at 34 to 44 (PEPNGYLHIGH). ATP is bound by residues 35–37 (EPN) and 41–47 (HIGHAKS). Positions 67 and 212 each coordinate L-glutamine. ATP-binding positions include threonine 231, 261 to 262 (RL), and 269 to 271 (MSK). The 'KMSKS' region signature appears at 268–272 (VMSKR). Positions 317–324 (TKQDNTIE) are interaction with tRNA.

The protein belongs to the class-I aminoacyl-tRNA synthetase family. In terms of assembly, monomer.

It localises to the cytoplasm. The enzyme catalyses tRNA(Gln) + L-glutamine + ATP = L-glutaminyl-tRNA(Gln) + AMP + diphosphate. This is Glutamine--tRNA ligase from Escherichia coli O127:H6 (strain E2348/69 / EPEC).